The following is a 293-amino-acid chain: ATP phosphoribosyltransferase (293 aa).

This sequence belongs to the ATP phosphoribosyltransferase family. Long subfamily. Mg(2+) serves as cofactor.

The protein localises to the cytoplasm. The enzyme catalyses 1-(5-phospho-beta-D-ribosyl)-ATP + diphosphate = 5-phospho-alpha-D-ribose 1-diphosphate + ATP. Its pathway is amino-acid biosynthesis; L-histidine biosynthesis; L-histidine from 5-phospho-alpha-D-ribose 1-diphosphate: step 1/9. With respect to regulation, feedback inhibited by histidine. Catalyzes the condensation of ATP and 5-phosphoribose 1-diphosphate to form N'-(5'-phosphoribosyl)-ATP (PR-ATP). Has a crucial role in the pathway because the rate of histidine biosynthesis seems to be controlled primarily by regulation of HisG enzymatic activity. The chain is ATP phosphoribosyltransferase from Nitratidesulfovibrio vulgaris (strain DSM 19637 / Miyazaki F) (Desulfovibrio vulgaris).